The chain runs to 168 residues: Protein archease (168 aa).

Ala-2 bears the N-acetylalanine mark. Ca(2+) is bound by residues Asp-39, Asp-167, and Ile-168.

The protein belongs to the archease family. In terms of assembly, component of the tRNA-splicing ligase complex.

Functionally, component of the tRNA-splicing ligase complex required to facilitate the enzymatic turnover of catalytic subunit RTCB. Together with DDX1, acts by facilitating the guanylylation of RTCB, a key intermediate step in tRNA ligation. This chain is Protein archease (Zbtb8os), found in Mus musculus (Mouse).